Consider the following 446-residue polypeptide: ATP synthase subunit b-delta (446 aa).

The interval 1-168 (MSTFIGQLFG…PATADVDYPL (168 aa)) is ATP synthase subunit b. The chain crosses the membrane as a helical span at residues 4-24 (FIGQLFGFAVIVYLVWRFIVP). The interval 169–446 (LAKMRSASRR…LAAAEARLPD (278 aa)) is ATP synthase subunit delta.

It in the N-terminal section; belongs to the ATPase B chain family. In the C-terminal section; belongs to the ATPase delta chain family. As to quaternary structure, F-type ATPases have 2 components, F(1) - the catalytic core - and F(0) - the membrane proton channel. F(1) has five subunits: alpha(3), beta(3), gamma(1), delta(1), epsilon(1). F(0) has three main subunits: a(1), b(2) and c(10-14). The alpha and beta chains form an alternating ring which encloses part of the gamma chain. F(1) is attached to F(0) by a central stalk formed by the gamma and epsilon chains, while a peripheral stalk is formed by the delta and b chains.

The protein localises to the cell membrane. F(1)F(0) ATP synthase produces ATP from ADP in the presence of a proton or sodium gradient. F-type ATPases consist of two structural domains, F(1) containing the extramembraneous catalytic core and F(0) containing the membrane proton channel, linked together by a central stalk and a peripheral stalk. During catalysis, ATP synthesis in the catalytic domain of F(1) is coupled via a rotary mechanism of the central stalk subunits to proton translocation. Functionally, this fusion protein includes a component of the F(0) channel (subunit b) and of the F(1) subunit (subunit delta). Two copies of subunit b and one of delta together form the peripheral 'stator' stalk which links F(1) to F(0). The sequence is that of ATP synthase subunit b-delta (atpFH) from Mycobacterium bovis (strain ATCC BAA-935 / AF2122/97).